The following is a 61-amino-acid chain: Photosystem II reaction center protein K (61 aa).

Positions 1-24 (MLNIFSLICICLHSTLYSSSFFLA) are excised as a propeptide. The chain crosses the membrane as a helical span at residues 36–56 (IVDFMPVIPLLFFLLAFVWQA).

The protein belongs to the PsbK family. As to quaternary structure, PSII is composed of 1 copy each of membrane proteins PsbA, PsbB, PsbC, PsbD, PsbE, PsbF, PsbH, PsbI, PsbJ, PsbK, PsbL, PsbM, PsbT, PsbX, PsbY, PsbZ, Psb30/Ycf12, at least 3 peripheral proteins of the oxygen-evolving complex and a large number of cofactors. It forms dimeric complexes.

It localises to the plastid. The protein resides in the chloroplast thylakoid membrane. One of the components of the core complex of photosystem II (PSII). PSII is a light-driven water:plastoquinone oxidoreductase that uses light energy to abstract electrons from H(2)O, generating O(2) and a proton gradient subsequently used for ATP formation. It consists of a core antenna complex that captures photons, and an electron transfer chain that converts photonic excitation into a charge separation. This is Photosystem II reaction center protein K from Eucalyptus globulus subsp. globulus (Tasmanian blue gum).